The chain runs to 543 residues: CTP synthase (543 aa).

An amidoligase domain region spans residues 1–270 (MNNLTSTKFI…DTQILKHFNI (270 aa)). Residue Ser18 coordinates CTP. Position 18 (Ser18) interacts with UTP. ATP-binding positions include 19-24 (SLGKGL) and Asp76. Residues Asp76 and Glu144 each coordinate Mg(2+). CTP contacts are provided by residues 151–153 (DIE), 191–196 (KTKPTQ), and Lys227. UTP is bound by residues 191–196 (KTKPTQ) and Lys227. Residues 295–537 (TIAIIGKYIK…IQASLNYQET (243 aa)) enclose the Glutamine amidotransferase type-1 domain. An L-glutamine-binding site is contributed by Gly356. Cys383 (nucleophile; for glutamine hydrolysis) is an active-site residue. L-glutamine contacts are provided by residues 384–387 (MGMQ), Glu407, and Arg462. Catalysis depends on residues His510 and Glu512.

This sequence belongs to the CTP synthase family. In terms of assembly, homotetramer.

The enzyme catalyses UTP + L-glutamine + ATP + H2O = CTP + L-glutamate + ADP + phosphate + 2 H(+). The catalysed reaction is L-glutamine + H2O = L-glutamate + NH4(+). It carries out the reaction UTP + NH4(+) + ATP = CTP + ADP + phosphate + 2 H(+). The protein operates within pyrimidine metabolism; CTP biosynthesis via de novo pathway; CTP from UDP: step 2/2. Its activity is regulated as follows. Allosterically activated by GTP, when glutamine is the substrate; GTP has no effect on the reaction when ammonia is the substrate. The allosteric effector GTP functions by stabilizing the protein conformation that binds the tetrahedral intermediate(s) formed during glutamine hydrolysis. Inhibited by the product CTP, via allosteric rather than competitive inhibition. Catalyzes the ATP-dependent amination of UTP to CTP with either L-glutamine or ammonia as the source of nitrogen. Regulates intracellular CTP levels through interactions with the four ribonucleotide triphosphates. This is CTP synthase from Ehrlichia ruminantium (strain Gardel).